The chain runs to 44 residues: Tachystatin-A1 (44 aa).

Intrachain disulfides connect C4-C24, C11-C29, and C23-C41.

As to expression, granular hemocytes, small secretory granules.

It is found in the secreted. Its function is as follows. Exhibits stronger antimicrobial activity against the Gram-positive bacteria (S.aureus (IC(50) is 4.2 ug/ml)) and fungi (C.albicans (IC(50) is 3.0 ug/ml) and P.pastoris (IC(50) is 0.5 ug/ml)) than Gram-negative bacteria (E.coli (IC(50) is 25 ug/ml)). Binds to chitin (8.4 uM are required to obtain 50% of binding). Does not cause hemolysis on sheep erythrocytes. Has no blocking activity on the P-type calcium channel. The sequence is that of Tachystatin-A1 from Tachypleus tridentatus (Japanese horseshoe crab).